A 258-amino-acid polypeptide reads, in one-letter code: Regulatory protein RecX (258 aa).

It belongs to the RecX family.

The protein resides in the cytoplasm. Modulates RecA activity. The chain is Regulatory protein RecX from Streptococcus pneumoniae (strain 70585).